Here is a 66-residue protein sequence, read N- to C-terminus: Large ribosomal subunit protein bL33c (66 aa).

This sequence belongs to the bacterial ribosomal protein bL33 family.

It is found in the plastid. Its subcellular location is the chloroplast. In Lotus japonicus (Lotus corniculatus var. japonicus), this protein is Large ribosomal subunit protein bL33c.